The chain runs to 803 residues: Leucine--tRNA ligase (803 aa).

The 'HIGH' region motif lies at Pro40–His51. Residues Lys575 to Ser579 carry the 'KMSKS' region motif. Residue Lys578 coordinates ATP.

This sequence belongs to the class-I aminoacyl-tRNA synthetase family.

Its subcellular location is the cytoplasm. It carries out the reaction tRNA(Leu) + L-leucine + ATP = L-leucyl-tRNA(Leu) + AMP + diphosphate. The protein is Leucine--tRNA ligase of Listeria innocua serovar 6a (strain ATCC BAA-680 / CLIP 11262).